Reading from the N-terminus, the 572-residue chain is Thiamine biosynthesis protein THI22 (572 aa).

Positions 1–19 (MVIILLGLCTLGFPRTAFC) are cleaved as a signal peptide.

The protein belongs to the thiaminase-2 family.

The protein localises to the secreted. Functionally, is not required for thiamine biosynthesis. This is Thiamine biosynthesis protein THI22 (THI22) from Saccharomyces cerevisiae (strain ATCC 204508 / S288c) (Baker's yeast).